The chain runs to 190 residues: UPF0200 protein TSIB_0920 (190 aa).

Glycine 7–glycine 14 contacts ATP.

Belongs to the UPF0200 family.

In Thermococcus sibiricus (strain DSM 12597 / MM 739), this protein is UPF0200 protein TSIB_0920.